The primary structure comprises 225 residues: Protein-L-isoaspartate O-methyltransferase 2 (225 aa).

The active site involves S73.

Belongs to the methyltransferase superfamily. L-isoaspartyl/D-aspartyl protein methyltransferase family.

It localises to the cytoplasm. It catalyses the reaction [protein]-L-isoaspartate + S-adenosyl-L-methionine = [protein]-L-isoaspartate alpha-methyl ester + S-adenosyl-L-homocysteine. Functionally, catalyzes the methyl esterification of L-isoaspartyl residues in peptides and proteins that result from spontaneous decomposition of normal L-aspartyl and L-asparaginyl residues. It plays a role in the repair and/or degradation of damaged proteins. The polypeptide is Protein-L-isoaspartate O-methyltransferase 2 (Pelobacter propionicus (strain DSM 2379 / NBRC 103807 / OttBd1)).